A 545-amino-acid chain; its full sequence is Glucans biosynthesis protein G (545 aa).

Residues 1 to 34 (MVSLLRCQSFKPSSSLICSLALSAAFALSSSAFA) form the signal peptide. Residues 38-60 (KPAENKPATPVVSPPKATAQPAN) form a disordered region.

Belongs to the OpgD/OpgG family.

The protein resides in the periplasm. It functions in the pathway glycan metabolism; osmoregulated periplasmic glucan (OPG) biosynthesis. Functionally, involved in the biosynthesis of osmoregulated periplasmic glucans (OPGs). In Shewanella sp. (strain MR-7), this protein is Glucans biosynthesis protein G.